We begin with the raw amino-acid sequence, 144 residues long: Large ribosomal subunit protein uL15 (144 aa).

The disordered stretch occupies residues 1-57; that stretch reads MKLNDLSPAPGSRREKHRPGRGIGSGLGKTGGRGHKGQTSRSGGTIAPGFEGGQQPL. Residues 21–31 are compositionally biased toward gly residues; the sequence is RGIGSGLGKTG.

The protein belongs to the universal ribosomal protein uL15 family. Part of the 50S ribosomal subunit.

Its function is as follows. Binds to the 23S rRNA. This Pseudomonas fluorescens (strain ATCC BAA-477 / NRRL B-23932 / Pf-5) protein is Large ribosomal subunit protein uL15.